The following is a 269-amino-acid chain: Hydroxyethylthiazole kinase (269 aa).

M42 is a substrate binding site. 2 residues coordinate ATP: R118 and S164. Residue G191 coordinates substrate.

The protein belongs to the Thz kinase family. Requires Mg(2+) as cofactor.

It catalyses the reaction 5-(2-hydroxyethyl)-4-methylthiazole + ATP = 4-methyl-5-(2-phosphooxyethyl)-thiazole + ADP + H(+). It functions in the pathway cofactor biosynthesis; thiamine diphosphate biosynthesis; 4-methyl-5-(2-phosphoethyl)-thiazole from 5-(2-hydroxyethyl)-4-methylthiazole: step 1/1. Its function is as follows. Catalyzes the phosphorylation of the hydroxyl group of 4-methyl-5-beta-hydroxyethylthiazole (THZ). The sequence is that of Hydroxyethylthiazole kinase from Listeria welshimeri serovar 6b (strain ATCC 35897 / DSM 20650 / CCUG 15529 / CIP 8149 / NCTC 11857 / SLCC 5334 / V8).